The following is an 89-amino-acid chain: uncharacterized protein (89 aa).

This is an uncharacterized protein from Borreliella burgdorferi (strain ATCC 35210 / DSM 4680 / CIP 102532 / B31) (Borrelia burgdorferi).